We begin with the raw amino-acid sequence, 278 residues long: Undecaprenyl-diphosphatase 1 (278 aa).

A run of 7 helical transmembrane segments spans residues 46-66, 91-111, 119-139, 153-173, 191-211, 225-245, and 256-276; these read VVGFTAVIQVGAIAAVLVYFF, YTFTWWVIYATIPVVLVGLAA, LASLWVVAASLLAGSALMWFA, SLPDAMIVGTSQILALLFPGF, VAATRLSFFLSIPALTGAGLY, PLAVGTVVSFFVAYASIAWLL, and FIIYRVAVAVLLAGLLAGGAI.

The protein belongs to the UppP family.

It localises to the cell membrane. It carries out the reaction di-trans,octa-cis-undecaprenyl diphosphate + H2O = di-trans,octa-cis-undecaprenyl phosphate + phosphate + H(+). In terms of biological role, catalyzes the dephosphorylation of undecaprenyl diphosphate (UPP). Confers resistance to bacitracin. The sequence is that of Undecaprenyl-diphosphatase 1 from Frankia alni (strain DSM 45986 / CECT 9034 / ACN14a).